Here is a 130-residue protein sequence, read N- to C-terminus: uncharacterized protein (130 aa).

Topologically, residues 1–58 are cytoplasmic; that stretch reads MREQLKLFTREIVDFTFLILSGFDYYQTLLISSNSSKKRPKDSSLLSEKKKKKKKKKK. The tract at residues 34–57 is disordered; that stretch reads NSSKKRPKDSSLLSEKKKKKKKKK. The chain crosses the membrane as a helical span at residues 59–79; that stretch reads DVLSYLSYLKDLPFVPFLFWQ. Topologically, residues 80 to 94 are extracellular; it reads PGYSQREKNPRQHSL. The chain crosses the membrane as a helical span at residues 95–115; that stretch reads FIMTITKPGMISMADMNYVVS. Over 116 to 130 the chain is Cytoplasmic; the sequence is KNRSLNRPAERGGNR.

The protein resides in the membrane. This is an uncharacterized protein from Saccharomyces cerevisiae (strain ATCC 204508 / S288c) (Baker's yeast).